The primary structure comprises 179 residues: Large ribosomal subunit protein uL5 (179 aa).

This sequence belongs to the universal ribosomal protein uL5 family. In terms of assembly, part of the 50S ribosomal subunit; part of the 5S rRNA/L5/L18/L25 subcomplex. Contacts the 5S rRNA and the P site tRNA. Forms a bridge to the 30S subunit in the 70S ribosome.

Functionally, this is one of the proteins that bind and probably mediate the attachment of the 5S RNA into the large ribosomal subunit, where it forms part of the central protuberance. In the 70S ribosome it contacts protein S13 of the 30S subunit (bridge B1b), connecting the 2 subunits; this bridge is implicated in subunit movement. Contacts the P site tRNA; the 5S rRNA and some of its associated proteins might help stabilize positioning of ribosome-bound tRNAs. In Pseudomonas savastanoi pv. phaseolicola (strain 1448A / Race 6) (Pseudomonas syringae pv. phaseolicola (strain 1448A / Race 6)), this protein is Large ribosomal subunit protein uL5.